The chain runs to 426 residues: Histidine--tRNA ligase (426 aa).

The protein belongs to the class-II aminoacyl-tRNA synthetase family. Homodimer.

It is found in the cytoplasm. The enzyme catalyses tRNA(His) + L-histidine + ATP = L-histidyl-tRNA(His) + AMP + diphosphate + H(+). This Geobacillus thermodenitrificans (strain NG80-2) protein is Histidine--tRNA ligase.